Reading from the N-terminus, the 337-residue chain is tRNA N6-adenosine threonylcarbamoyltransferase (337 aa).

Positions 111 and 115 each coordinate Fe cation. Residues 134-138 (LVSGG), Asp167, Gly180, and Asn272 each bind substrate. Asp300 lines the Fe cation pocket.

The protein belongs to the KAE1 / TsaD family. It depends on Fe(2+) as a cofactor.

It is found in the cytoplasm. The enzyme catalyses L-threonylcarbamoyladenylate + adenosine(37) in tRNA = N(6)-L-threonylcarbamoyladenosine(37) in tRNA + AMP + H(+). In terms of biological role, required for the formation of a threonylcarbamoyl group on adenosine at position 37 (t(6)A37) in tRNAs that read codons beginning with adenine. Is involved in the transfer of the threonylcarbamoyl moiety of threonylcarbamoyl-AMP (TC-AMP) to the N6 group of A37, together with TsaE and TsaB. TsaD likely plays a direct catalytic role in this reaction. The polypeptide is tRNA N6-adenosine threonylcarbamoyltransferase (Escherichia coli O139:H28 (strain E24377A / ETEC)).